The sequence spans 102 residues: Small ribosomal subunit protein uS10 (102 aa).

This sequence belongs to the universal ribosomal protein uS10 family. In terms of assembly, part of the 30S ribosomal subunit.

Its function is as follows. Involved in the binding of tRNA to the ribosomes. In Bifidobacterium longum (strain DJO10A), this protein is Small ribosomal subunit protein uS10.